Reading from the N-terminus, the 533-residue chain is Heterogeneous nuclear ribonucleoprotein Q (533 aa).

A2 carries the post-translational modification N-acetylalanine. S69 is subject to Phosphoserine. RRM domains are found at residues 72–151 (TEIF…ISVA), 153–235 (NRLF…WADP), and 248–318 (KVLF…FAKP). Residue K78 forms a Glycyl lysine isopeptide (Lys-Gly) (interchain with G-Cter in SUMO2) linkage. K131 is subject to N6-acetyllysine. K273 is modified (N6-acetyllysine). A Phosphotyrosine modification is found at Y283. Positions 310–471 (NIEIVFAKPP…GARGGRGGNV (162 aa)) are interaction with APOBEC1. R354 is modified (asymmetric dimethylarginine; by PRMT1; alternate). The residue at position 354 (R354) is an Omega-N-methylarginine; by PRMT1; alternate. A run of 6 repeats spans residues 358–360 (RGG), 361–363 (RGG), 370–374 (YYGYE), 379–382 (YYGY), 388–390 (RGG), and 395–398 (YYGY). The segment at 358–469 (RGGRGGYGYP…VRGARGGRGG (112 aa)) is 8 X 3 AA repeats of R-G-G. Residues 370–398 (YYGYEDYYDYYGYDYHNYRGGYEDPYYGY) form a 3 X 4 AA repeats of Y-Y-G-Y region. R406 is subject to Omega-N-methylarginine; by PRMT1. Residues 407 to 533 (GRGGRGARGA…YQDTFGQQWK (127 aa)) form a disordered region. The 1-4 repeat unit spans residues 408-410 (RGG). A compositionally biased stretch (low complexity) spans 414–432 (RGAAPSRGRGAAPPRGRAG). R420 is subject to Asymmetric dimethylarginine; by PRMT1. R428 carries the post-translational modification Asymmetric dimethylarginine; by PRMT1; alternate. R428 carries the omega-N-methylarginine; by PRMT1; alternate modification. Residues 428-459 (RGRAGYSQRGGPGSARGVRGARGGAQQQRGRG) are interaction with SMN. Position 436 is an asymmetric dimethylarginine; alternate (R436). Position 436 is an omega-N-methylarginine; alternate (R436). Residues 436 to 438 (RGG) form a 1-5 repeat. An asymmetric dimethylarginine; by PRMT1; alternate mark is found at R446 and R449. Omega-N-methylarginine; by PRMT1; alternate occurs at positions 446 and 449. Repeat copies occupy residues 449-451 (RGG), 464-466 (RGG), and 467-469 (RGG). The span at 460 to 472 (VRGARGGRGGNVG) shows a compositional bias: gly residues. A Bipartite nuclear localization signal motif is present at residues 474–488 (KRKADGYNQPDSKRR). Polar residues predominate over residues 490–505 (TNNQNWGSQPIAQQPL). Position 497 is a phosphoserine (S497). A Glycyl lysine isopeptide (Lys-Gly) (interchain with G-Cter in SUMO2) cross-link involves residue K517.

Identified in a histone pre-mRNA complex, at least composed of ERI1, LSM11, SLBP, SNRPB, SYNCRIP and YBX1. Identified in the spliceosome C complex. Component of the coding region determinant (CRD)-mediated complex, composed of DHX9, HNRNPU, IGF2BP1, SYNCRIP and YBX1. Identified in a mRNP complex, at least composed of DHX9, DDX3X, ELAVL1, HNRNPU, IGF2BP1, ILF3, PABPC1, PCBP2, PTBP2, STAU1, STAU2, SYNCRIP and YBX1. Identified in a mRNP granule complex, at least composed of ACTB, ACTN4, DHX9, ERG, HNRNPA1, HNRNPA2B1, HNRNPAB, HNRNPD, HNRNPL, HNRNPR, HNRNPU, HSPA1, HSPA8, IGF2BP1, ILF2, ILF3, NCBP1, NCL, PABPC1, PABPC4, PABPN1, RPLP0, RPS3, RPS3A, RPS4X, RPS8, RPS9, SYNCRIP, YBX1 and untranslated mRNAs. Component of the APOB mRNA editosome. Interacts with APOBEC1 and A1CF. Part of a complex associated with the FOS mCRD domain and consisting of PABPC1, PAIP1, CSDE1/UNR, HNRPD and SYNCRIP. Interacts with HNRPR, SMN, POLR2A hyperphosphorylated C-terminal domain, minute virus of mice (MVM) NS1 protein and through its C-terminal domain with SYT7, SYT8 and SYT9. The non-phosphorylated and phosphorylated forms are colocalized with PAIP1 in polysomes. Interacts with GTPBP1. Interacts with HABP4. Phosphorylated on tyrosine. The membrane-bound form found in microsomes is phosphorylated in vitro by insulin receptor tyrosine kinase (INSR). Phosphorylation is inhibited upon binding to RNA, whereas the cytoplasmic form is poorly phosphorylated.

It localises to the nucleus. The protein localises to the nucleoplasm. The protein resides in the cytoplasm. It is found in the microsome. Functionally, heterogenous nuclear ribonucleoprotein (hnRNP) implicated in mRNA processing mechanisms. Component of the CRD-mediated complex that promotes MYC mRNA stability. Is associated in vitro with pre-mRNA, splicing intermediates and mature mRNA protein complexes. Binds to apoB mRNA AU-rich sequences. Part of the APOB mRNA editosome complex and may modulate the postranscriptional C to U RNA-editing of the APOB mRNA through either by binding to A1CF (APOBEC1 complementation factor), to APOBEC1 or to RNA itself. May be involved in translationally coupled mRNA turnover. Implicated with other RNA-binding proteins in the cytoplasmic deadenylation/translational and decay interplay of the FOS mRNA mediated by the major coding-region determinant of instability (mCRD) domain. Interacts in vitro preferentially with poly(A) and poly(U) RNA sequences. May be involved in cytoplasmic vesicle-based mRNA transport through interaction with synaptotagmins. The protein is Heterogeneous nuclear ribonucleoprotein Q (Syncrip) of Rattus norvegicus (Rat).